A 764-amino-acid chain; its full sequence is uncharacterized protein (764 aa).

This is an uncharacterized protein from Acanthamoeba polyphaga (Amoeba).